The sequence spans 626 residues: tRNA uridine 5-carboxymethylaminomethyl modification enzyme MnmG (626 aa).

An FAD-binding site is contributed by 13 to 18; the sequence is GGGHAG. An NAD(+)-binding site is contributed by 273 to 287; that stretch reads GPRYCPSIEDKIHRF.

It belongs to the MnmG family. In terms of assembly, homodimer. Heterotetramer of two MnmE and two MnmG subunits. Requires FAD as cofactor.

It localises to the cytoplasm. Functionally, NAD-binding protein involved in the addition of a carboxymethylaminomethyl (cmnm) group at the wobble position (U34) of certain tRNAs, forming tRNA-cmnm(5)s(2)U34. The polypeptide is tRNA uridine 5-carboxymethylaminomethyl modification enzyme MnmG (Acinetobacter baumannii (strain ATCC 17978 / DSM 105126 / CIP 53.77 / LMG 1025 / NCDC KC755 / 5377)).